The following is a 95-amino-acid chain: Opiscorpine-1 (95 aa).

Positions 1-19 are cleaved as a signal peptide; the sequence is MNNKLTALIFLGLLAIASC. Residues 55–95 enclose the BetaSPN-type CS-alpha/beta domain; sequence EFMCVANVDMTKSCDTHCQKASGEKGYCHGTKCKCGVPLSY. Disulfide bonds link C58–C82, C68–C87, and C72–C89.

It belongs to the long chain scorpion toxin family. Class 3 subfamily. Expressed by the venom gland.

The protein localises to the secreted. Functionally, the short synthetic peptide (20-54) has antimicrobial activity against the yeasts F.culmorum (IC(50)=8.8 uM) and F.oxysporum (IC(50)=10 uM), and the Gram-negative bacteria E.coli. This Opistophthalmus carinatus (African yellow leg scorpion) protein is Opiscorpine-1.